The chain runs to 153 residues: Nucleoside diphosphate kinase (153 aa).

ATP contacts are provided by Lys9, Phe57, Arg85, Thr91, Arg102, and Asn112. His115 functions as the Pros-phosphohistidine intermediate in the catalytic mechanism.

This sequence belongs to the NDK family. Homotetramer. The cofactor is Mg(2+).

The protein localises to the cytoplasm. The catalysed reaction is a 2'-deoxyribonucleoside 5'-diphosphate + ATP = a 2'-deoxyribonucleoside 5'-triphosphate + ADP. It carries out the reaction a ribonucleoside 5'-diphosphate + ATP = a ribonucleoside 5'-triphosphate + ADP. In terms of biological role, major role in the synthesis of nucleoside triphosphates other than ATP. The ATP gamma phosphate is transferred to the NDP beta phosphate via a ping-pong mechanism, using a phosphorylated active-site intermediate. The polypeptide is Nucleoside diphosphate kinase (Parabacteroides distasonis (strain ATCC 8503 / DSM 20701 / CIP 104284 / JCM 5825 / NCTC 11152)).